Here is a 260-residue protein sequence, read N- to C-terminus: Flap endonuclease Xni (260 aa).

D109 serves as a coordination point for Mg(2+). Residues 165-259 enclose the 5'-3' exonuclease domain; it reads VKPSQLADYW…DIRFTGPNKA (95 aa). Residues L176, P185, V187, and I190 each coordinate K(+). The interaction with DNA stretch occupies residues 189-194; that stretch reads GIGPKA.

Belongs to the Xni family. The cofactor is Mg(2+). K(+) is required as a cofactor.

Has flap endonuclease activity. During DNA replication, flap endonucleases cleave the 5'-overhanging flap structure that is generated by displacement synthesis when DNA polymerase encounters the 5'-end of a downstream Okazaki fragment. This chain is Flap endonuclease Xni, found in Vibrio parahaemolyticus serotype O3:K6 (strain RIMD 2210633).